Reading from the N-terminus, the 215-residue chain is MFNLPLTSVFVIFLFALSPIYGAFEYMQLVLQWPTAFCHTTPCKNIPSNFTIHGLWPDNVSTTLNFCGKEDDYNIIMDGPEKNGLYVRWPDLIREKADCMKTQNFWRREYIKHGTCCSEIYNQVQYFRLAMALKDKFDLLTSLKNHGIIRGYKYTVQKINNTIKTVTKGYPNLSCTKGQELWFVGICFDSTAKNVIDCPNPKTCKTASNQGIMFP.

A signal peptide spans M1–G22. Q32 lines the RNA pocket. Cysteines 38 and 43 form a disulfide. N49 is a glycosylation site (N-linked (GlcNAc...) asparagine). RNA is bound at residue H53. The active-site Proton donor is H53. A glycan (N-linked (GlcNAc...) asparagine) is linked at N59. The cysteines at positions 67 and 116 are disulfide-linked. RNA contacts are provided by residues D91–L92, R94, F105, R108–E109, and K112–H113. The active site involves E109. H113 acts as the Proton acceptor in catalysis. Residues N160 and N172 are each glycosylated (N-linked (GlcNAc...) asparagine). Disulfide bonds link C175-C204 and C187-C198.

The protein belongs to the RNase T2 family.

Its subcellular location is the secreted. It localises to the extracellular space. The catalysed reaction is a ribonucleotidyl-ribonucleotide-RNA + H2O = a 3'-end 3'-phospho-ribonucleotide-RNA + a 5'-end dephospho-ribonucleoside-RNA + H(+). Self-incompatibility (SI) is the inherited ability of a flowering plant to prevent self-fertilization by discriminating between self and non-self pollen during pollination. In many species of the Solanaceae, self-incompatibility is controlled by the single, multiallelic locus S. This stylar glycoprotein is associated with expression of self-incompatibility in potato. The polypeptide is Ribonuclease S-6 (Nicotiana alata (Winged tobacco)).